The chain runs to 326 residues: tRNA uridine(34) hydroxylase (326 aa).

In terms of domain architecture, Rhodanese spans 123-217; the sequence is SDPDVLLVDT…YLEEVKQEES (95 aa). Cys177 functions as the Cysteine persulfide intermediate in the catalytic mechanism. The disordered stretch occupies residues 304 to 326; that stretch reads VSQVILSRRTEKEDQRQAQNKKA.

The protein belongs to the TrhO family.

It catalyses the reaction uridine(34) in tRNA + AH2 + O2 = 5-hydroxyuridine(34) in tRNA + A + H2O. In terms of biological role, catalyzes oxygen-dependent 5-hydroxyuridine (ho5U) modification at position 34 in tRNAs. This Shewanella sediminis (strain HAW-EB3) protein is tRNA uridine(34) hydroxylase.